Reading from the N-terminus, the 78-residue chain is UPF0349 protein SSP1836 (78 aa).

Belongs to the UPF0349 family.

The polypeptide is UPF0349 protein SSP1836 (Staphylococcus saprophyticus subsp. saprophyticus (strain ATCC 15305 / DSM 20229 / NCIMB 8711 / NCTC 7292 / S-41)).